The primary structure comprises 69 residues: MKALVLGLLRVYRYAISPMLGRNCRFHPCCSEYAQEAVERHGAMRGGWLALKRVGRCHPFHPGGYDPVP.

Belongs to the UPF0161 family.

The protein resides in the cell inner membrane. In terms of biological role, could be involved in insertion of integral membrane proteins into the membrane. This Aromatoleum aromaticum (strain DSM 19018 / LMG 30748 / EbN1) (Azoarcus sp. (strain EbN1)) protein is Putative membrane protein insertion efficiency factor.